The chain runs to 126 residues: Profilin (126 aa).

It belongs to the profilin family. Occurs in many kinds of cells as a complex with monomeric actin in a 1:1 ratio.

Its subcellular location is the cytoplasm. It localises to the cytoskeleton. Its function is as follows. Binds to actin and affects the structure of the cytoskeleton. At high concentrations, profilin prevents the polymerization of actin, whereas it enhances it at low concentrations. By binding to PIP2, it inhibits the formation of IP3 and DG. The sequence is that of Profilin from Bombyx mori (Silk moth).